The chain runs to 203 residues: MMENLQVNQREKKTRHSSRQCRRKGLVPGVIYGKGINNFLFEIGELELNHALSVTGEHGLLSINSQEGSLNTLIKEVQRDPVTRRVLHIDLEKVEGNEEIETAVPINYVGEEYINKLDAVLQKNLDSIKVKCSPSNIPKGVNLNVGRAKPGDQFKIADVEFGNEITVVDDLNSIVASVSYDQKIITQEVVDQEVAENRAKKES.

The disordered stretch occupies residues 1-21 (MMENLQVNQREKKTRHSSRQC). Residues 12 to 21 (KKTRHSSRQC) are compositionally biased toward basic residues.

It belongs to the bacterial ribosomal protein bL25 family. CTC subfamily. As to quaternary structure, part of the 50S ribosomal subunit; part of the 5S rRNA/L5/L18/L25 subcomplex. Contacts the 5S rRNA. Binds to the 5S rRNA independently of L5 and L18.

In terms of biological role, this is one of the proteins that binds to the 5S RNA in the ribosome where it forms part of the central protuberance. This is Large ribosomal subunit protein bL25 from Clostridium perfringens (strain 13 / Type A).